Consider the following 395-residue polypeptide: Cyclomarin C epoxidase CymV (395 aa).

This sequence belongs to the cytochrome P450 family.

Functionally, cytochrome P450; part of the gene cluster that mediates the biosynthesis of cyclic heptapeptides, known as cyclomarins and also of cyclic dipeptides, called cyclomarazines, which have both antimicrobial and cytotoxic effects. First, CymD catalyzes the reverse N-prenylation of monomeric L-tryptophan with dimethylallyl diphosphate (DMAPP) to form N-(1,1-dimethylallyl)-tryptophan (r-N-DMAT). The N-(1,1-dimethylallyl)-tryptophan produced by CymD is then combined with a range of standard and nonproteinogenic amino acid substrates to synthesize the peptides, a process that is probably catalyzed by the non-canonical nonribosomal peptide synthetase (NRPS), CymA. Other proteins in the cluster catalyze further modifications of the peptides including CymV which catalyzes the oxidation of olefinic cyclomarins and cyclomarazines to their respective epoxide derivatives. The sequence is that of Cyclomarin C epoxidase CymV from Salinispora arenicola (strain CNS-205).